The primary structure comprises 189 residues: Parkinson disease protein 7 homolog (189 aa).

Residue A2 is modified to N-acetylalanine; in Protein/nucleic acid deglycase DJ-1, N-terminally processed. S-palmitoyl cysteine attachment occurs at residues C46 and C53. Y67 is subject to Phosphotyrosine. The active-site Nucleophile is C106. C106 is modified (cysteine sulfinic acid (-SO2H); alternate). C106 carries the S-palmitoyl cysteine; alternate lipid modification. H126 is an active-site residue. Residue K130 forms a Glycyl lysine isopeptide (Lys-Gly) (interchain with G-Cter in SUMO) linkage. At K148 the chain carries N6-acetyllysine. At K182 the chain carries N6-succinyllysine.

Belongs to the peptidase C56 family. As to quaternary structure, homodimer. Binds EFCAB6/DJBP and PIAS2. Part of a ternary complex containing PARK7, EFCAB6/DJBP and AR. Interacts (via N-terminus) with OTUD7B. Interacts with BBS1, HIPK1, CLCF1 and MTERF. Forms a complex with PINK1 and PRKN. Interacts (via C-terminus) with NCF1; the interaction is enhanced by LPS and modulates NCF1 phosphorylation and membrane translocation. Interacts with NENF. Deglycase activity does not require glutathione as a cofactor, however, glycated glutathione constitutes a PARK7 substrate. serves as cofactor. Sumoylated on Lys-130 by PIAS2 or PIAS4; which is essential for cell-growth promoting activity and transforming activity. Post-translationally, undergoes cleavage of a C-terminal peptide and subsequent activation of protease activity in response to oxidative stress. Detected in liver, heart, spleen and testis (at protein level). Detected in liver, heart, spleen, kidney, epididymidis, vas deferens, sperm cells and testis.

It is found in the cell membrane. It localises to the cytoplasm. The protein resides in the nucleus. Its subcellular location is the membrane raft. The protein localises to the mitochondrion. It is found in the endoplasmic reticulum. The enzyme catalyses N(omega)-(1-hydroxy-2-oxopropyl)-L-arginyl-[protein] + H2O = lactate + L-arginyl-[protein] + H(+). The catalysed reaction is N(6)-(1-hydroxy-2-oxopropyl)-L-lysyl-[protein] + H2O = lactate + L-lysyl-[protein] + H(+). It carries out the reaction S-(1-hydroxy-2-oxopropyl)-L-cysteinyl-[protein] + H2O = lactate + L-cysteinyl-[protein] + H(+). It catalyses the reaction N(omega)-(1-hydroxy-2-oxoethyl)-L-arginyl-[protein] + H2O = L-arginyl-[protein] + glycolate + H(+). The enzyme catalyses N(6)-(1-hydroxy-2-oxoethyl)-L-lysyl-[protein] + H2O = glycolate + L-lysyl-[protein] + H(+). The catalysed reaction is S-(1-hydroxy-2-oxoethyl)-L-cysteinyl-[protein] + H2O = glycolate + L-cysteinyl-[protein] + H(+). It carries out the reaction N(2)-(1-hydroxy-2-oxopropyl)-dGTP + H2O = lactate + dGTP + H(+). It catalyses the reaction N(2)-(1-hydroxy-2-oxopropyl)-GTP + H2O = lactate + GTP + H(+). The enzyme catalyses N(2)-(1-hydroxy-2-oxopropyl)-GDP + H2O = lactate + GDP + H(+). The catalysed reaction is N(2)-(1-hydroxy-2-oxopropyl)-GMP + H2O = lactate + GMP + H(+). It carries out the reaction N(2)-(1-hydroxy-2-oxoethyl)-dGTP + H2O = dGTP + glycolate + H(+). It catalyses the reaction N(2)-(1-hydroxy-2-oxoethyl)-GTP + H2O = glycolate + GTP + H(+). The enzyme catalyses N(2)-(1-hydroxy-2-oxoethyl)-GDP + H2O = glycolate + GDP + H(+). The catalysed reaction is N(2)-(1-hydroxy-2-oxoethyl)-GMP + H2O = glycolate + GMP + H(+). It carries out the reaction an N(2)-(1-hydroxy-2-oxopropyl)-guanosine in RNA + H2O = a guanosine in RNA + lactate + H(+). It catalyses the reaction an N(2)-(1-hydroxy-2-oxopropyl)-2'-deoxyguanosine in DNA + H2O = a 2'-deoxyguanosine in DNA + lactate + H(+). The enzyme catalyses an N(2)-(1-hydroxy-2-oxoethyl)-guanosine in RNA + H2O = a guanosine in RNA + glycolate + H(+). The catalysed reaction is an N(2)-(1-hydroxy-2-oxoethyl)-2'-deoxyguanosine in DNA + H2O = a 2'-deoxyguanosine in DNA + glycolate + H(+). Functionally, multifunctional protein with controversial molecular function which plays an important role in cell protection against oxidative stress and cell death acting as oxidative stress sensor and redox-sensitive chaperone and protease. It is involved in neuroprotective mechanisms like the stabilization of NFE2L2 and PINK1 proteins, male fertility as a positive regulator of androgen signaling pathway as well as cell growth and transformation through, for instance, the modulation of NF-kappa-B signaling pathway. Has been described as a protein and nucleotide deglycase that catalyzes the deglycation of the Maillard adducts formed between amino groups of proteins or nucleotides and reactive carbonyl groups of glyoxals. But this function is rebuted by other works. As a protein deglycase, repairs methylglyoxal- and glyoxal-glycated proteins, and releases repaired proteins and lactate or glycolate, respectively. Deglycates cysteine, arginine and lysine residues in proteins, and thus reactivates these proteins by reversing glycation by glyoxals. Acts on early glycation intermediates (hemithioacetals and aminocarbinols), preventing the formation of advanced glycation endproducts (AGE) that cause irreversible damage. Also functions as a nucleotide deglycase able to repair glycated guanine in the free nucleotide pool (GTP, GDP, GMP, dGTP) and in DNA and RNA. Is thus involved in a major nucleotide repair system named guanine glycation repair (GG repair), dedicated to reversing methylglyoxal and glyoxal damage via nucleotide sanitization and direct nucleic acid repair. Protects histones from adduction by methylglyoxal, controls the levels of methylglyoxal-derived argininine modifications on chromatin. Able to remove the glycations and restore histone 3, histone glycation disrupts both local and global chromatin architecture by altering histone-DNA interactions as well as histone acetylation and ubiquitination levels. Displays a very low glyoxalase activity that may reflect its deglycase activity. Eliminates hydrogen peroxide and protects cells against hydrogen peroxide-induced cell death. Required for correct mitochondrial morphology and function as well as for autophagy of dysfunctional mitochondria. Plays a role in regulating expression or stability of the mitochondrial uncoupling proteins SLC25A14 and SLC25A27 in dopaminergic neurons of the substantia nigra pars compacta and attenuates the oxidative stress induced by calcium entry into the neurons via L-type channels during pacemaking. Regulates astrocyte inflammatory responses, may modulate lipid rafts-dependent endocytosis in astrocytes and neuronal cells. In pancreatic islets, involved in the maintenance of mitochondrial reactive oxygen species (ROS) levels and glucose homeostasis in an age- and diet dependent manner. Protects pancreatic beta cells from cell death induced by inflammatory and cytotoxic setting. Binds to a number of mRNAs containing multiple copies of GG or CC motifs and partially inhibits their translation but dissociates following oxidative stress. Metal-binding protein able to bind copper as well as toxic mercury ions, enhances the cell protection mechanism against induced metal toxicity. In macrophages, interacts with the NADPH oxidase subunit NCF1 to direct NADPH oxidase-dependent ROS production, and protects against sepsis. The sequence is that of Parkinson disease protein 7 homolog (PARK7) from Mesocricetus auratus (Golden hamster).